The chain runs to 1080 residues: uncharacterized protein (1080 aa).

The N-terminal stretch at 1-17 (MHKLLVIIAHIIVCAYA) is a signal peptide. Residues 18-1042 (DFTGFDNEAG…KSLDLEMIGK (1025 aa)) lie on the Extracellular side of the membrane. Asn439, Asn664, and Asn875 each carry an N-linked (GlcNAc...) asparagine; by host glycan. Residues 1043–1063 (IILLIAFVIVFVILLTIGIIT) form a helical membrane-spanning segment. Topologically, residues 1064 to 1080 (LVKRHRETLPEDEYLLP) are cytoplasmic.

It is found in the host membrane. This is an uncharacterized protein from Ostreid herpesvirus 1 (isolate France) (OsHV-1).